The chain runs to 330 residues: GMP reductase (330 aa).

Cysteine 180 acts as the Thioimidate intermediate in catalysis. 209-232 provides a ligand contact to NADP(+); the sequence is LIADGGIRHNGDIAKSVRFGASMV.

The protein belongs to the IMPDH/GMPR family. GuaC type 2 subfamily.

The enzyme catalyses IMP + NH4(+) + NADP(+) = GMP + NADPH + 2 H(+). In terms of biological role, catalyzes the irreversible NADPH-dependent deamination of GMP to IMP. It functions in the conversion of nucleobase, nucleoside and nucleotide derivatives of G to A nucleotides, and in maintaining the intracellular balance of A and G nucleotides. This is GMP reductase from Lactobacillus johnsonii (strain CNCM I-12250 / La1 / NCC 533).